Reading from the N-terminus, the 477-residue chain is Peroxisome proliferator-activated receptor gamma (477 aa).

S87 is subject to Phosphoserine; by MAPK. The segment at residues 110–184 (AIECRVCGDK…VGMSHNAIRF (75 aa)) is a DNA-binding region (nuclear receptor). 2 consecutive NR C4-type zinc fingers follow at residues 113–133 (CRVCGDKASGFHYGVHACEGC) and 150–172 (CDLNCRIHKKSRNKCQFCRFQKC). Residues 231-281 (TKAKAPGHPDGQSHRQNSRGYTRHELADDGGGSDQGAVREPRAEQGGGDSN) are disordered. One can recognise an NR LBD domain in the interval 252–475 (TRHELADDGG…HPLLQEIYKD (224 aa)). The 9aaTAD signature appears at 467-475 (PLLQEIYKD).

It belongs to the nuclear hormone receptor family. NR1 subfamily. As to quaternary structure, heterodimer with the retinoid X receptor. In terms of tissue distribution, expressed mainly in adipose tissue and kidney.

The protein localises to the nucleus. It localises to the cytoplasm. Its function is as follows. Receptor that binds peroxisome proliferators such as hypolipidemic drugs and fatty acids. Once activated by a ligand, the receptor binds to a promoter element in the gene for acyl-CoA oxidase and activates its transcription. It therefore controls the peroxisomal beta-oxidation pathway of fatty acids. Key regulator of adipocyte differentiation and glucose homeostasis. May play a role in the regulation of circadian rhythm. The protein is Peroxisome proliferator-activated receptor gamma (pparg) of Xenopus laevis (African clawed frog).